A 269-amino-acid polypeptide reads, in one-letter code: Aegyptin-like protein (269 aa).

Positions 1–19 are cleaved as a signal peptide; it reads MKLLLLLASVLCLALIVSA. Residues 19-152 form a disordered region; that stretch reads ARPSDETTDQ…GGAEGGEESP (134 aa). A GE-rich region which mediates binding of Ca(2+) region spans residues 38-148; that stretch reads TSDSYHQEED…AGEEGGAEGG (111 aa). Acidic residues-rich tracts occupy residues 56–73, 98–121, and 131–149; these read GTED…ESSS, GEED…EGGA, and GGAD…EGGE. The mediates binding of host collagen and inhibition of platelet aggregation stretch occupies residues 148-269; sequence GEESPVNTYH…DCIVEKRDSE (122 aa). Cystine bridges form between cysteine 208-cysteine 261 and cysteine 230-cysteine 239.

It belongs to the aegyptin family. Female saliva (at protein level). Distal lateral lobes of female salivary gland (at protein level). Low-level expression in male salivary gland. Not detected in female and male carcasses.

The protein localises to the secreted. In terms of biological role, modulates blood feeding of female mosquitoes on vertebrate hosts. Inhibits collagen-induced platelet aggregation in the host via preventing collagen interaction with its ligands: glycoprotein VI and integrin alpha-2/beta-1 (ITGA2/ITGB1). Inhibits collagen-induced increase of Ca(2+) levels in host platelets. Binds to host collagens. Binds Ca(2+). Prevents a decrease in platelet count in the host blood after collagen injection. Its function is as follows. (Microbial infection) Does not affect the development of Plasmodium berghei parasites in mosquitoes. In Anopheles stephensi (Indo-Pakistan malaria mosquito), this protein is Aegyptin-like protein.